Consider the following 291-residue polypeptide: Phosphoribosylaminoimidazole-succinocarboxamide synthase (291 aa).

It belongs to the SAICAR synthetase family.

The catalysed reaction is 5-amino-1-(5-phospho-D-ribosyl)imidazole-4-carboxylate + L-aspartate + ATP = (2S)-2-[5-amino-1-(5-phospho-beta-D-ribosyl)imidazole-4-carboxamido]succinate + ADP + phosphate + 2 H(+). Its pathway is purine metabolism; IMP biosynthesis via de novo pathway; 5-amino-1-(5-phospho-D-ribosyl)imidazole-4-carboxamide from 5-amino-1-(5-phospho-D-ribosyl)imidazole-4-carboxylate: step 1/2. The polypeptide is Phosphoribosylaminoimidazole-succinocarboxamide synthase (ADE1) (Candida maltosa (Yeast)).